We begin with the raw amino-acid sequence, 352 residues long: Cuticle collagen dpy-17 (352 aa).

The signal sequence occupies residues 1-29; sequence MSVFAGYAACTLGAVSMLLCVSLVPQVYQ. The furin-like endopeptidase recognition region stretch occupies residues 61–64; that stretch reads RVRR. Disordered regions lie at residues 73–143 and 156–352; these read GGYG…GPGD and GPAG…GYRN. Positions 87–97 are enriched in gly residues; it reads GPHGGFPGGPQ. Triple-helical region stretches follow at residues 156–182, 202–264, 267–290, and 294–329; these read GPAG…DGED, GPQG…DVEH, GLPG…QGDR, and GIAG…PGQD. The 58-residue stretch at 202–259 folds into the Collagen-like domain; sequence GPQGPPGSQGKPGARGMRGARGQAAMPGRDGSPGMPGSLGPIGPPGAAGEEGPTGEPG. Low complexity predominate over residues 207–259; that stretch reads PGSQGKPGARGMRGARGQAAMPGRDGSPGMPGSLGPIGPPGAAGEEGPTGEPG. The span at 337–352 shows a compositional bias: polar residues; it reads QRNTNAAVSGNQGYRN.

This sequence belongs to the cuticular collagen family. Collagen polypeptide chains are complexed within the cuticle by disulfide bonds and other types of covalent cross-links.

The protein resides in the secreted. It is found in the extracellular space. In terms of biological role, secreted collagen that forms part of the nematode cuticle, which functions as an exoskeleton and a barrier to protect the worm from its environment. Secretion and subsequent incorporation into the cuticle is likely mediated by bli-4, which probably cleaves at the N-terminal consensus furin cleavage site. The protein is Cuticle collagen dpy-17 of Caenorhabditis elegans.